The chain runs to 337 residues: ATP-dependent 6-phosphofructokinase (337 aa).

Glycine 11 lines the ATP pocket. ADP is bound at residue 21 to 25; the sequence is RAVVR. Residues 72 to 73 and 102 to 105 contribute to the ATP site; these read RY and GDGS. Aspartate 103 contributes to the Mg(2+) binding site. A substrate-binding site is contributed by 125–127; the sequence is TID. Aspartate 127 acts as the Proton acceptor in catalysis. Position 154 (arginine 154) interacts with ADP. Residues arginine 162 and 169 to 171 each bind substrate; that span reads MGR. Residues 185–187, lysine 212, and 214–216 contribute to the ADP site; these read GAD and KNH. Substrate-binding positions include glutamate 223, arginine 245, and 251-254; that span reads HILR.

The protein belongs to the phosphofructokinase type A (PFKA) family. ATP-dependent PFK group I subfamily. Prokaryotic clade 'B1' sub-subfamily. Homotetramer. Mg(2+) is required as a cofactor.

Its subcellular location is the cytoplasm. It catalyses the reaction beta-D-fructose 6-phosphate + ATP = beta-D-fructose 1,6-bisphosphate + ADP + H(+). Its pathway is carbohydrate degradation; glycolysis; D-glyceraldehyde 3-phosphate and glycerone phosphate from D-glucose: step 3/4. Its activity is regulated as follows. Allosterically activated by ADP and other diphosphonucleosides, and allosterically inhibited by phosphoenolpyruvate. Catalyzes the phosphorylation of D-fructose 6-phosphate to fructose 1,6-bisphosphate by ATP, the first committing step of glycolysis. In Streptococcus pyogenes serotype M3 (strain SSI-1), this protein is ATP-dependent 6-phosphofructokinase.